A 62-amino-acid polypeptide reads, in one-letter code: GKIAVSIVKALEHLHSKLSVIHRDVKPSNVLINKEGQVNMCDFGISGYLVDSVAKTMDAGCK.

Residues 1-62 (GKIAVSIVKA…VAKTMDAGCK (62 aa)) enclose the Protein kinase domain.

This sequence belongs to the protein kinase superfamily. STE Ser/Thr protein kinase family. MAP kinase kinase subfamily. Activated by phosphorylation on Ser/Thr catalyzed by MAP kinase kinase kinases.

It carries out the reaction L-seryl-[protein] + ATP = O-phospho-L-seryl-[protein] + ADP + H(+). The enzyme catalyses L-threonyl-[protein] + ATP = O-phospho-L-threonyl-[protein] + ADP + H(+). It catalyses the reaction L-tyrosyl-[protein] + ATP = O-phospho-L-tyrosyl-[protein] + ADP + H(+). Functionally, catalyzes the concomitant phosphorylation of a threonine and a tyrosine residue in a Thr-Glu-Tyr sequence located in MAP kinases. In Xenopus laevis (African clawed frog), this protein is Dual specificity mitogen-activated protein kinase kinase 3 (map2k3).